The primary structure comprises 267 residues: Protein TIFY 7 (267 aa).

Positions 113 to 148 (SSGSSPQLTIFYGGTISVFNDISPDKAQAIMLCAGN) constitute a Tify domain. The Jas motif lies at 220 to 244 (PQARKASLARFLEKRKERLMSAMPY). The short motif at 222 to 229 (ARKASLAR) is the Nuclear localization signal element.

This sequence belongs to the TIFY/JAZ family. Homo- and heterodimer. Interacts with MYC2, MYC3, MYC4, COI1, AFPH2/NINJA, TIFY10A/JAZ1, TIFY10B/JAZ2, TIFY6B/JAZ3, TIFY5A/JAZ8, TIFY9/JAZ10 and TIFY3A/JAZ11. Interacts with RHD6 and RSL1. Ubiquitinated. Targeted for degradation by the SCF(COI1) E3 ubiquitin ligase-proteasome pathway during jasmonate signaling.

The protein resides in the nucleus. Functionally, repressor of jasmonate responses. Jasmonoyl-isoleucine (JA-Ile) specifically promotes COI1-TIFY7/JAZ9 interaction. Interacts with and suppresses RHD6 and RSL1 transcription factor activities to negatively regulate jasmonate-stimulated root hair development. This chain is Protein TIFY 7 (TIFY7), found in Arabidopsis thaliana (Mouse-ear cress).